The sequence spans 207 residues: Small ribosomal subunit protein uS4c (207 aa).

In terms of domain architecture, S4 RNA-binding spans 92 to 153 (MRLDNILFRL…PKTYQSILSK (62 aa)).

The protein belongs to the universal ribosomal protein uS4 family. Part of the 30S ribosomal subunit. Contacts protein S5. The interaction surface between S4 and S5 is involved in control of translational fidelity.

Its subcellular location is the plastid. It is found in the chloroplast. One of the primary rRNA binding proteins, it binds directly to 16S rRNA where it nucleates assembly of the body of the 30S subunit. Functionally, with S5 and S12 plays an important role in translational accuracy. The protein is Small ribosomal subunit protein uS4c (rps4) of Equisetum hyemale (Dutch rush).